The sequence spans 263 residues: uncharacterized protein (263 aa).

The protein belongs to the AtsA family.

Its subcellular location is the plastid. It localises to the chloroplast. This is an uncharacterized protein from Pyropia yezoensis (Susabi-nori).